The primary structure comprises 426 residues: MKDLIQELKNRKLISKLTDEINIKKILKEKKINLYCGFDPTADSLHIGHLIPLLFLKRFSNFGHIPIIVIGGATALLGDFNIKKNKSFLEKYKNVKNWSKTIENQILNIIKYENNNCNLIILNNYLWIKELKIINFLRDIGRFISINKILRKEIVKKKLKENQHISFMEFSYSLLQGYDYYFLNLNYDVYIQIGGSDQWSNIISGIDLVNKINKKKVYGITTPLLTRSNGSKLGKSDDKEKVIWLDKKKTSVYEFYQFWLNTPDEKIFRYLKLFTFISMSEINKLKCKFFNKEINPFQAQKILADEITKIVHGISQLRLAQKATNFLFYKKISELSIEDFYLLSTSGIKIYYPKSNENIKDILVNSKLSKSKNNAKSVILSSSIRINNKKQKSIDFMFKKEDKLFNLFTLIKKGKKDFCLLIWKNY.

Position 35 (Y35) interacts with L-tyrosine. Positions 40 to 49 (PTADSLHIGH) match the 'HIGH' region motif. Residues Y172 and Q176 each contribute to the L-tyrosine site. The short motif at 232–236 (KLGKS) is the 'KMSKS' region element. K235 is an ATP binding site. The 58-residue stretch at 357-414 (ENIKDILVNSKLSKSKNNAKSVILSSSIRINNKKQKSIDFMFKKEDKLFNLFTLIKKG) folds into the S4 RNA-binding domain.

It belongs to the class-I aminoacyl-tRNA synthetase family. TyrS type 1 subfamily. As to quaternary structure, homodimer.

The protein localises to the cytoplasm. The catalysed reaction is tRNA(Tyr) + L-tyrosine + ATP = L-tyrosyl-tRNA(Tyr) + AMP + diphosphate + H(+). Functionally, catalyzes the attachment of tyrosine to tRNA(Tyr) in a two-step reaction: tyrosine is first activated by ATP to form Tyr-AMP and then transferred to the acceptor end of tRNA(Tyr). The chain is Tyrosine--tRNA ligase from Wigglesworthia glossinidia brevipalpis.